The sequence spans 290 residues: Cbb3-type cytochrome c oxidase subunit FixP (290 aa).

A helical membrane pass occupies residues 33–53; sequence WWVITFYITIVWAIGYWIVYP. 2 consecutive Cytochrome c domains span residues 109-198 and 206-287; these read LARA…RSLS and YDAA…HSLG. Heme c is bound by residues C122, C125, H126, M173, C219, C222, H223, and M264.

It belongs to the CcoP / FixP family. Component of the cbb3-type cytochrome c oxidase at least composed of FixN, FixO, FixQ and FixP. Requires heme c as cofactor.

It is found in the cell inner membrane. It participates in energy metabolism; oxidative phosphorylation. Its function is as follows. C-type cytochrome. Part of the cbb3-type cytochrome c oxidase complex. FixP subunit is required for transferring electrons from donor cytochrome c via its heme groups to FixO subunit. From there, electrons are shuttled to the catalytic binuclear center of FixN subunit where oxygen reduction takes place. The complex also functions as a proton pump. This Bradyrhizobium sp. (strain ORS 278) protein is Cbb3-type cytochrome c oxidase subunit FixP.